The following is a 412-amino-acid chain: GATOR complex protein NPRL2 (412 aa).

The protein belongs to the NPR2 family. In terms of assembly, component of the GATOR complex consisting of mio, Nup44A/Seh1, Im11, Nplr3, Nplr2, Wdr24, Wdr59 and Sec13. Within the GATOR complex, probable component of the GATOR1 subcomplex which is likely composed of Iml1, Nplr2 and Nplr3. Interacts with Nprl3.

It is found in the cytoplasm. The protein resides in the lysosome. In terms of biological role, an essential component of the GATOR subcomplex GATOR1 which functions as an inhibitor of the amino acid-sensing branch of the TORC1 signaling pathway. The two GATOR subcomplexes, GATOR1 and GATOR2, regulate the TORC1 pathway in order to mediate metabolic homeostasis, female gametogenesis and the response to amino acid limitation and complete starvation. The function of GATOR1 in negatively regulating the TORC1 pathway is essential for maintaining baseline levels of TORC1 activity under nutrient rich conditions, and for promoting survival during amino acid or complete starvation by inhibiting TORC1-dependent cell growth and promoting catabolic metabolism and autophagy. In addition, this inhibition of TORC1 is necessary to maintain female fertility under normal conditions and during periods of nutrient stress. GATOR1 and GATOR2 act at different stages of oogenesis to regulate TORC1 in order to control meiotic entry and promote oocyte growth and development. After exactly four mitotic cyst divisions, the GATOR1 complex members (Iml1, Nprl2 and Nprl3) down-regulate TORC1 to slow cellular metabolism and promote the mitotic/meiotic transition. At later stages of oogenesis, the mio and Nup44A components of the GATOR2 complex inhibit GATOR1 and thus activate TORC1 to promote meiotic progression, and drive oocyte growth and development. This Drosophila melanogaster (Fruit fly) protein is GATOR complex protein NPRL2.